The sequence spans 504 residues: 6,7,8-trihydroxycoumarin synthase (504 aa).

The chain crosses the membrane as a helical span at residues 1–21 (MEPVFLFLILAFPIASVYLLF). The segment at 363-368 (PAPVLV) is substrate specificity. Cys-444 contributes to the heme binding site.

This sequence belongs to the cytochrome P450 family. The cofactor is heme.

It localises to the microsome membrane. It participates in secondary metabolite biosynthesis. Its function is as follows. Involved in the biosynthesis of coumarins and furanocoumarins (FCs), natural products required for defense responses against attacks by predators with potential medical and agroindustrial usages such as anticoagulant, rodenticide and artificial vanilla substitutes. Able to catalyze the hydroxylation of esculetin to produce 6,7,8-trihydroxycoumarin. The protein is 6,7,8-trihydroxycoumarin synthase of Pastinaca sativa (Wild parsnip).